The primary structure comprises 83 residues: Ferredoxin (83 aa).

4Fe-4S ferredoxin-type domains follow at residues 2–29 (ALMI…QGDE) and 31–64 (YVIE…KDPS). The [4Fe-4S] cluster site is built by cysteine 9, cysteine 12, cysteine 15, cysteine 19, cysteine 38, cysteine 41, cysteine 50, and cysteine 54.

It depends on [4Fe-4S] cluster as a cofactor.

In terms of biological role, ferredoxins are iron-sulfur proteins that transfer electrons in a wide variety of metabolic reactions. The protein is Ferredoxin (fdx) of Allochromatium vinosum (strain ATCC 17899 / DSM 180 / NBRC 103801 / NCIMB 10441 / D) (Chromatium vinosum).